A 122-amino-acid polypeptide reads, in one-letter code: UPF0102 protein CE1920 (122 aa).

Belongs to the UPF0102 family.

This is UPF0102 protein CE1920 from Corynebacterium efficiens (strain DSM 44549 / YS-314 / AJ 12310 / JCM 11189 / NBRC 100395).